Consider the following 409-residue polypeptide: Tyrosine--tRNA ligase (409 aa).

The short motif at 54-63 (PTAPDIHLGH) is the 'HIGH' region element. Residues 238–242 (KMSKS) carry the 'KMSKS' region motif. Lys-241 lines the ATP pocket. Residues 347–407 (QGILRILREA…GKRKFARVKL (61 aa)) enclose the S4 RNA-binding domain.

The protein belongs to the class-I aminoacyl-tRNA synthetase family. TyrS type 2 subfamily. As to quaternary structure, homodimer.

Its subcellular location is the cytoplasm. It carries out the reaction tRNA(Tyr) + L-tyrosine + ATP = L-tyrosyl-tRNA(Tyr) + AMP + diphosphate + H(+). In terms of biological role, catalyzes the attachment of tyrosine to tRNA(Tyr) in a two-step reaction: tyrosine is first activated by ATP to form Tyr-AMP and then transferred to the acceptor end of tRNA(Tyr). The chain is Tyrosine--tRNA ligase from Bordetella parapertussis (strain 12822 / ATCC BAA-587 / NCTC 13253).